The following is a 78-amino-acid chain: Large ribosomal subunit protein bL28 (78 aa).

The interval 1 to 30 is disordered; sequence MAAHCQVTGAGPGFGHSISHSHRRTKRRFD.

The protein belongs to the bacterial ribosomal protein bL28 family.

This Micrococcus luteus (strain ATCC 4698 / DSM 20030 / JCM 1464 / CCM 169 / CCUG 5858 / IAM 1056 / NBRC 3333 / NCIMB 9278 / NCTC 2665 / VKM Ac-2230) (Micrococcus lysodeikticus) protein is Large ribosomal subunit protein bL28.